The following is a 677-amino-acid chain: DNA ligase (677 aa).

Residues 34-38, 83-84, and Glu-117 contribute to the NAD(+) site; these read DAEYD and SL. Lys-119 (N6-AMP-lysine intermediate) is an active-site residue. NAD(+) is bound by residues Arg-140, Glu-175, Lys-283, and Lys-307. Positions 401, 404, 419, and 425 each coordinate Zn(2+). One can recognise a BRCT domain in the interval 594-677; that stretch reads SHLSLLHGKT…QYISPNTNEN (84 aa).

It belongs to the NAD-dependent DNA ligase family. LigA subfamily. Mg(2+) is required as a cofactor. Requires Mn(2+) as cofactor.

It carries out the reaction NAD(+) + (deoxyribonucleotide)n-3'-hydroxyl + 5'-phospho-(deoxyribonucleotide)m = (deoxyribonucleotide)n+m + AMP + beta-nicotinamide D-nucleotide.. DNA ligase that catalyzes the formation of phosphodiester linkages between 5'-phosphoryl and 3'-hydroxyl groups in double-stranded DNA using NAD as a coenzyme and as the energy source for the reaction. It is essential for DNA replication and repair of damaged DNA. The chain is DNA ligase from Ehrlichia canis (strain Jake).